Here is a 114-residue protein sequence, read N- to C-terminus: Probable 4-amino-4-deoxy-L-arabinose-phosphoundecaprenol flippase subunit ArnE (114 aa).

Helical transmembrane passes span 41–61 (GWLW…LLVL) and 68–88 (VAYP…HFVF). An EamA domain is found at 43–112 (LWLALFSLGL…VIGGVLLLSR (70 aa)).

This sequence belongs to the ArnE family. In terms of assembly, heterodimer of ArnE and ArnF.

The protein localises to the cell inner membrane. It participates in bacterial outer membrane biogenesis; lipopolysaccharide biosynthesis. Translocates 4-amino-4-deoxy-L-arabinose-phosphoundecaprenol (alpha-L-Ara4N-phosphoundecaprenol) from the cytoplasmic to the periplasmic side of the inner membrane. The polypeptide is Probable 4-amino-4-deoxy-L-arabinose-phosphoundecaprenol flippase subunit ArnE (Pseudomonas fluorescens (strain ATCC BAA-477 / NRRL B-23932 / Pf-5)).